The chain runs to 555 residues: Solute carrier family 22 member 2 (555 aa).

Over 1–21 (MSTVDDILEHIGEFHLFQKQT) the chain is Cytoplasmic. A helical membrane pass occupies residues 22–42 (FFLLALLSGAFTPIYVGIVFL). The Extracellular portion of the chain corresponds to 43 to 150 (GFTPDHHCWS…LVCAHSWMLD (108 aa)). The N-linked (GlcNAc...) asparagine glycan is linked to N71. A helical membrane pass occupies residues 151–171 (LFQSVVNVGFFIGAMMIGYLA). The Cytoplasmic segment spans residues 172–177 (DRFGRK). The chain crosses the membrane as a helical span at residues 178–198 (FCLLVTILINAISGALMAISP). The Extracellular segment spans residues 199-210 (NYAWMLVFRFLQ). Residues 211–231 (GLVSKAGWLIGYILITEFVGL) form a helical membrane-spanning segment. Topologically, residues 232–238 (GYRRMVG) are cytoplasmic. The chain crosses the membrane as a helical span at residues 239–259 (ICYQIAFTVGLLILAGVAYVI). At 260 to 263 (PNWR) the chain is on the extracellular side. A helical transmembrane segment spans residues 264–284 (WLQFAVTLPNFCFLLYFWCIP). The Proline-rich sequence motif lies at 284 to 288 (PESPR). Residues 285 to 348 (ESPRWLISQN…VRTPQIRKHT (64 aa)) are Cytoplasmic-facing. The helical transmembrane segment at 349-369 (LILMYNWFTSSVLYQGLIMHM) threads the bilayer. Residues 370-375 (GLAGDN) lie on the Extracellular side of the membrane. Residues 376 to 396 (IYLDFFYSALVEFPAAFIIIL) traverse the membrane as a helical segment. Residues 397 to 404 (TIDRVGRR) lie on the Cytoplasmic side of the membrane. Residues 405–425 (YPWAVSNMVAGAACLASVFIP) form a helical membrane-spanning segment. Residues 426-432 (DDLQWLK) lie on the Extracellular side of the membrane. The helical transmembrane segment at 433–453 (ITIACLGRMGITMAYEMVCLV) threads the bilayer. Residues 454-464 (NAELYPTYIRN) are Cytoplasmic-facing. Residues 465 to 485 (LGVLVCSSMCDIGGIITPFLV) form a helical membrane-spanning segment. The Extracellular segment spans residues 486-494 (YRLTDIWME). Residues 495 to 515 (FPLVVFAVVGLVAGALVLLLP) form a helical membrane-spanning segment. Residues 516–555 (ETKGKALPETIEDAENMQRPRKKKEKRIYLQVKQADRPLS) are Cytoplasmic-facing.

The protein belongs to the major facilitator (TC 2.A.1) superfamily. Organic cation transporter (TC 2.A.1.19) family. Tyrosine phosphorylated. As to expression, expressed in the kidney, in the proximal tubules of cortex and of the outer medulla. In brain, highly expressed predominantly in regions located at the brain-cerebrospinal fluid border, in the leptomeninges, in the choroid plexus and in a layer boarding the third ventricle. In brain, also observed in the granular cell layer of the cerebellum and in the granular layer and pyramidal cells of the hippocampus in the CA1-CA3 regions. Expressed in tracheal and bronchial ciliated epithelium in the respiratory tract. Expression is greater in the kidney of male than of female.

It localises to the basolateral cell membrane. The protein localises to the basal cell membrane. The protein resides in the apical cell membrane. The catalysed reaction is (R)-noradrenaline(out) = (R)-noradrenaline(in). It catalyses the reaction (R)-adrenaline(out) = (R)-adrenaline(in). It carries out the reaction serotonin(out) = serotonin(in). The enzyme catalyses dopamine(out) = dopamine(in). The catalysed reaction is histamine(out) = histamine(in). It catalyses the reaction thiamine(in) = thiamine(out). It carries out the reaction creatinine(in) = creatinine(out). The enzyme catalyses 1-methylnicotinamide(out) = 1-methylnicotinamide(in). The catalysed reaction is guanidine(out) = guanidine(in). It catalyses the reaction choline(out) = choline(in). It carries out the reaction agmatine(out) = agmatine(in). The enzyme catalyses putrescine(out) = putrescine(in). The catalysed reaction is spermidine(in) = spermidine(out). It catalyses the reaction tyramine(in) = tyramine(out). It carries out the reaction L-histidyl-L-proline diketopiperazine(in) = L-histidyl-L-proline diketopiperazine(out). The enzyme catalyses (R)-salsolinol(in) = (R)-salsolinol(out). The catalysed reaction is N-methyl-(R)-salsolinol(in) = N-methyl-(R)-salsolinol(out). It catalyses the reaction acetylcholine(in) = acetylcholine(out). It carries out the reaction prostaglandin F2alpha(out) = prostaglandin F2alpha(in). The enzyme catalyses prostaglandin E2(out) = prostaglandin E2(in). Its activity is regulated as follows. Tyrosine phosphorylation of the transporter leads to activation of the transport activity. Inhibited by cGMP, most likely through a cGMP-binding protein that interacts with OCT2. Its function is as follows. Electrogenic voltage-dependent transporter that mediates the transport of a variety of organic cations such as endogenous bioactive amines, cationic drugs and xenobiotics. Functions as a Na(+)-independent, bidirectional uniporter. Cation cellular uptake or release is driven by the electrochemical potential, i.e. membrane potential and concentration gradient. However, may also engage electroneutral cation exchange when saturating concentrations of cation substrates are reached. Predominantly expressed at the basolateral membrane of hepatocytes and proximal tubules and involved in the uptake and disposition of cationic compounds by hepatic and renal clearance from the blood flow. Implicated in monoamine neurotransmitters uptake such as histamine, dopamine, adrenaline/epinephrine, noradrenaline/norepinephrine, serotonin and tyramine, thereby supporting a physiological role in the central nervous system by regulating interstitial concentrations of neurotransmitters. Also capable of transporting dopaminergic neuromodulators cyclo(his-pro), salsolinol and N-methyl-salsolinol, thereby involved in the maintenance of dopaminergic cell integrity in the central nervous system. Mediates the bidirectional transport of acetylcholine (ACh) at the apical membrane of ciliated cell in airway epithelium, thereby playing a role in luminal release of ACh from bronchial epithelium. Also transports guanidine and endogenous monoamines such as vitamin B1/thiamine, creatinine and N-1-methylnicotinamide (NMN). Mediates the uptake and efflux of quaternary ammonium compound choline. Mediates the bidirectional transport of polyamine agmatine and the uptake of polyamine putrescine. Able to transport non-amine endogenous compounds such as prostaglandin E2 (PGE2) and prostaglandin F2-alpha (PGF2-alpha). Also involved in the uptake of xenobiotic 4-(4-(dimethylamino)styryl)-N-methylpyridinium (ASP). May contribute to regulate the transport of organic compounds in testis across the blood-testis-barrier. In Rattus norvegicus (Rat), this protein is Solute carrier family 22 member 2.